The following is a 259-amino-acid chain: Proliferating cell nuclear antigen (259 aa).

The DNA-binding element occupies 61-80 (RCDRNIALGVNLTSLTKVLR). Residue Lys-164 forms a Glycyl lysine isopeptide (Lys-Gly) (interchain with G-Cter in SUMO); alternate linkage. Residue Lys-164 forms a Glycyl lysine isopeptide (Lys-Gly) (interchain with G-Cter in ubiquitin); alternate linkage.

Belongs to the PCNA family. In terms of assembly, homotrimer. Monoubiquitinated on Lys-164 upon DNA damage, and then polyubiquitinated through 'Lys-63'-linkage.

Its subcellular location is the nucleus. Its function is as follows. This protein is an auxiliary protein of DNA polymerase delta and is involved in the control of eukaryotic DNA replication by increasing the polymerase's processibility during elongation of the leading strand. Involved in DNA repair. This Chaetomium thermophilum (strain DSM 1495 / CBS 144.50 / IMI 039719) (Thermochaetoides thermophila) protein is Proliferating cell nuclear antigen.